The primary structure comprises 118 residues: Large ribosomal subunit protein uL24 (118 aa).

Belongs to the universal ribosomal protein uL24 family. In terms of assembly, part of the 50S ribosomal subunit.

In terms of biological role, one of two assembly initiator proteins, it binds directly to the 5'-end of the 23S rRNA, where it nucleates assembly of the 50S subunit. One of the proteins that surrounds the polypeptide exit tunnel on the outside of the subunit. This is Large ribosomal subunit protein uL24 from Prochlorococcus marinus (strain AS9601).